The sequence spans 145 residues: Methyl-coenzyme M reductase I operon protein D (145 aa).

As to quaternary structure, MCR is composed of three subunits: alpha, beta, and gamma. The function of proteins C and D is not known.

This is Methyl-coenzyme M reductase I operon protein D (mcrD) from Methanothermobacter marburgensis (strain ATCC BAA-927 / DSM 2133 / JCM 14651 / NBRC 100331 / OCM 82 / Marburg) (Methanobacterium thermoautotrophicum).